Here is a 934-residue protein sequence, read N- to C-terminus: Sorting nexin-14 (934 aa).

Transmembrane regions (helical) follow at residues 27-47 (YPVIFCIFTVMISSTIILNQY) and 48-68 (LHILMVFWSFLAGVITFYCSL). Residues 129–303 (PSKVDASISE…MVLIFIDDSP (175 aa)) form the PXA domain. The RGS domain occupies 335–467 (DLKEIREQQD…CHSDEYFRHL (133 aa)). Residues 557–677 (WTISIPYVDF…DFLSPFSMES (121 aa)) enclose the PX domain.

Belongs to the sorting nexin family.

It localises to the lysosome membrane. The protein resides in the late endosome membrane. The protein localises to the cell projection. Its subcellular location is the dendrite. Its function is as follows. Plays a role in maintaining normal neuronal excitability and synaptic transmission. May be involved in several stages of intracellular trafficking. Required for autophagosome clearance, possibly by mediating the fusion of lysosomes with autophagosomes. Binds phosphatidylinositol 3,5-bisphosphate (PtdIns(3,5)P2), a key component of late endosomes/lysosomes. Does not bind phosphatidylinositol 3-phosphate (PtdIns(3P)). The protein is Sorting nexin-14 of Danio rerio (Zebrafish).